Reading from the N-terminus, the 842-residue chain is Histidine biosynthesis trifunctional protein (842 aa).

A phosphoribosyl-AMP cyclohydrolase region spans residues methionine 1 to phenylalanine 275. A phosphoribosyl-ATP pyrophosphohydrolase region spans residues cysteine 276–lysine 357. The histidinol dehydrogenase stretch occupies residues tyrosine 358–isoleucine 842. The segment at lysine 380 to serine 403 is disordered. The span at glutamate 390 to serine 403 shows a compositional bias: basic and acidic residues. 2 residues coordinate Zn(2+): glutamine 667 and histidine 670. Active-site residues include glutamate 736 and histidine 737. Zn(2+)-binding residues include aspartate 769 and histidine 828.

The protein in the C-terminal section; belongs to the histidinol dehydrogenase family. Zn(2+) serves as cofactor.

It carries out the reaction 1-(5-phospho-beta-D-ribosyl)-5'-AMP + H2O = 1-(5-phospho-beta-D-ribosyl)-5-[(5-phospho-beta-D-ribosylamino)methylideneamino]imidazole-4-carboxamide. It catalyses the reaction 1-(5-phospho-beta-D-ribosyl)-ATP + H2O = 1-(5-phospho-beta-D-ribosyl)-5'-AMP + diphosphate + H(+). The enzyme catalyses L-histidinol + 2 NAD(+) + H2O = L-histidine + 2 NADH + 3 H(+). Its pathway is amino-acid biosynthesis; L-histidine biosynthesis; L-histidine from 5-phospho-alpha-D-ribose 1-diphosphate: step 2/9. The protein operates within amino-acid biosynthesis; L-histidine biosynthesis; L-histidine from 5-phospho-alpha-D-ribose 1-diphosphate: step 3/9. It participates in amino-acid biosynthesis; L-histidine biosynthesis; L-histidine from 5-phospho-alpha-D-ribose 1-diphosphate: step 9/9. In Komagataella pastoris (Yeast), this protein is Histidine biosynthesis trifunctional protein (HIS4).